We begin with the raw amino-acid sequence, 88 residues long: Antitoxin HipB (88 aa).

An HTH cro/C1-type domain is found at 17–71 (MKLVRQQNGWTQSELAKKIGIKQATISNFENNPDNTTLTTFFKILQSLELSMTLC). Positions 21 to 47 (RQQNGWTQSELAKKIGIKQATISNFEN) form a DNA-binding region, H-T-H motif.

As to quaternary structure, homodimer. Binds operator DNA sites in the absence of HipA, inducing a 70 degree bend in consecutive operators and deforming DNA between the operators so that HipB dimers bind on opposite faces of the DNA. Forms a HipA(2)HipB(2) heterotetramer which can interact with a single operator site on DNA, inducing a 70 degree bend. When 2 operators are present each HipB dimer contacts 1 HipA molecule, which are brought together by the DNA bend and dimerize, blocking the HipA active site and inactivating its toxic activity. HipA-HipB-induced bending also distorts the -35 and -10 boxes of the promoter and probably prevents sigma-factor binding, and additionally bound HipB and HipA block RNA polymerase access to the -35 box, thus repressing the operon. This complex also blocks the toxic activity of HipA. Mutations present in allele hipA7 (G22S and D291A) decrease the affinity of HipA for HipB. Degraded by Lon protease in vivo; half-life is 17 minutes in wild-type cells and over 200 minutes in a lon deletion strain. In vitro degradation by Lon is Mg(2+)-ATP-dependent.

With respect to regulation, degraded by Lon protease; degradation is inhibited in a HipA-HipB complex and when bound to the operator consensus sequence dsDNA. Antitoxin component of a type II toxin-antitoxin (TA) system. Neutralizes the toxic effect of cognate toxin HipA. Also neutralizes the toxic effect of non-cognate toxin YjjJ. Binds to operator sites with the consensus sequence 5-'TATCCN(8)GGATA-3' to repress the hipBA operon promoter; binding of HipB(2) to DNA induces a 70 degree bend. This forces HipA dimerization, which blocks HipA's active site and thus its toxic action. May play a role in biofilm formation. The chain is Antitoxin HipB (hipB) from Escherichia coli (strain K12).